The primary structure comprises 1252 residues: HEAT repeat-containing protein 6 (1252 aa).

The stretch at Pro230–Gly269 is one HEAT 1 repeat. The segment at Asp365 to Gly417 is disordered. The segment covering Ala384–Lys396 has biased composition (basic residues). Ser471 and Ser474 each carry phosphoserine. HEAT repeat units lie at residues Glu524 to Gln562, Ser586 to Tyr624, and Ser630 to Pro667. Phosphothreonine is present on Thr689. Phosphoserine is present on Ser714.

In Rattus norvegicus (Rat), this protein is HEAT repeat-containing protein 6 (Heatr6).